Consider the following 117-residue polypeptide: Ribosome-binding factor A (117 aa).

Belongs to the RbfA family. In terms of assembly, monomer. Binds 30S ribosomal subunits, but not 50S ribosomal subunits or 70S ribosomes.

Its subcellular location is the cytoplasm. One of several proteins that assist in the late maturation steps of the functional core of the 30S ribosomal subunit. Associates with free 30S ribosomal subunits (but not with 30S subunits that are part of 70S ribosomes or polysomes). Required for efficient processing of 16S rRNA. May interact with the 5'-terminal helix region of 16S rRNA. The polypeptide is Ribosome-binding factor A (Leuconostoc mesenteroides subsp. mesenteroides (strain ATCC 8293 / DSM 20343 / BCRC 11652 / CCM 1803 / JCM 6124 / NCDO 523 / NBRC 100496 / NCIMB 8023 / NCTC 12954 / NRRL B-1118 / 37Y)).